The following is a 205-amino-acid chain: Protein N-terminal glutamine amidohydrolase (205 aa).

Active-site residues include Cys-20, His-74, and Asp-90.

Belongs to the NTAQ1 family. In terms of assembly, monomer.

It catalyses the reaction N-terminal L-glutaminyl-[protein] + H2O = N-terminal L-glutamyl-[protein] + NH4(+). Functionally, mediates the side-chain deamidation of N-terminal glutamine residues to glutamate, an important step in N-end rule pathway of protein degradation. Conversion of the resulting N-terminal glutamine to glutamate renders the protein susceptible to arginylation, polyubiquitination and degradation as specified by the N-end rule. Does not act on substrates with internal or C-terminal glutamine and does not act on non-glutamine residues in any position. In Drosophila ananassae (Fruit fly), this protein is Protein N-terminal glutamine amidohydrolase (tun).